The following is a 317-amino-acid chain: Methionyl-tRNA formyltransferase (317 aa).

112 to 115 (SLLP) contacts (6S)-5,6,7,8-tetrahydrofolate.

This sequence belongs to the Fmt family.

The catalysed reaction is L-methionyl-tRNA(fMet) + (6R)-10-formyltetrahydrofolate = N-formyl-L-methionyl-tRNA(fMet) + (6S)-5,6,7,8-tetrahydrofolate + H(+). Attaches a formyl group to the free amino group of methionyl-tRNA(fMet). The formyl group appears to play a dual role in the initiator identity of N-formylmethionyl-tRNA by promoting its recognition by IF2 and preventing the misappropriation of this tRNA by the elongation apparatus. In Mycobacterium avium (strain 104), this protein is Methionyl-tRNA formyltransferase.